Consider the following 363-residue polypeptide: Cyanide hydratase (363 aa).

Positions 6–285 (YKAACVTSEP…DGLLFVDIDL (280 aa)) constitute a CN hydrolase domain. The active-site Proton acceptor is the Glu-46. Lys-128 is an active-site residue. Catalysis depends on Cys-163, which acts as the Nucleophile.

This sequence belongs to the carbon-nitrogen hydrolase superfamily. Nitrilase family. Oligomer of dimers, forming left-handed helical fibers.

The enzyme catalyses formamide = hydrogen cyanide + H2O. Functionally, catalyzes the hydration of cyanide to formamide. Degradation of cyanide may be important for plant pathogenic fungi in infection of cyanogenic plants. This chain is Cyanide hydratase (CyhAB), found in Alternaria brassicicola (Dark leaf spot agent).